The primary structure comprises 203 residues: Small ribosomal subunit protein uS4 (203 aa).

In terms of domain architecture, S4 RNA-binding spans 93 to 156; sequence RRLDNVVYRL…IKVPAILEAV (64 aa).

The protein belongs to the universal ribosomal protein uS4 family. In terms of assembly, part of the 30S ribosomal subunit. Contacts protein S5. The interaction surface between S4 and S5 is involved in control of translational fidelity.

Its function is as follows. One of the primary rRNA binding proteins, it binds directly to 16S rRNA where it nucleates assembly of the body of the 30S subunit. Functionally, with S5 and S12 plays an important role in translational accuracy. This is Small ribosomal subunit protein uS4 from Streptococcus suis (strain 98HAH33).